Consider the following 366-residue polypeptide: tRNA/tmRNA (uracil-C(5))-methyltransferase (366 aa).

S-adenosyl-L-methionine contacts are provided by Q190, Y218, N223, E239, and D299. Residue C324 is the Nucleophile of the active site. E358 functions as the Proton acceptor in the catalytic mechanism.

This sequence belongs to the class I-like SAM-binding methyltransferase superfamily. RNA M5U methyltransferase family. TrmA subfamily.

It catalyses the reaction uridine(54) in tRNA + S-adenosyl-L-methionine = 5-methyluridine(54) in tRNA + S-adenosyl-L-homocysteine + H(+). The catalysed reaction is uridine(341) in tmRNA + S-adenosyl-L-methionine = 5-methyluridine(341) in tmRNA + S-adenosyl-L-homocysteine + H(+). Dual-specificity methyltransferase that catalyzes the formation of 5-methyluridine at position 54 (m5U54) in all tRNAs, and that of position 341 (m5U341) in tmRNA (transfer-mRNA). This Salmonella arizonae (strain ATCC BAA-731 / CDC346-86 / RSK2980) protein is tRNA/tmRNA (uracil-C(5))-methyltransferase.